A 208-amino-acid chain; its full sequence is Small ribosomal subunit protein uS5 (208 aa).

The segment covering 1-21 (MSDREQRDGGRSAENNNDRKG) has biased composition (basic and acidic residues). Positions 1–38 (MSDREQRDGGRSAENNNDRKGRNNGRRNDRRNHQDNER) are disordered. Positions 41-104 (YIERVVTINR…EEARKNFFRV (64 aa)) constitute an S5 DRBM domain.

It belongs to the universal ribosomal protein uS5 family. In terms of assembly, part of the 30S ribosomal subunit. Contacts proteins S4 and S8.

Its function is as follows. With S4 and S12 plays an important role in translational accuracy. Located at the back of the 30S subunit body where it stabilizes the conformation of the head with respect to the body. In Corynebacterium aurimucosum (strain ATCC 700975 / DSM 44827 / CIP 107346 / CN-1) (Corynebacterium nigricans), this protein is Small ribosomal subunit protein uS5.